Consider the following 272-residue polypeptide: Insulin-like growth factor-binding protein 1 (272 aa).

The first 25 residues, Met1–Gly25, serve as a signal peptide directing secretion. The region spanning Gln28–Glu109 is the IGFBP N-terminal domain. Cystine bridges form between Cys32-Cys59, Cys35-Cys61, Cys43-Cys62, Cys50-Cys65, Cys73-Cys86, and Cys80-Cys106. A phosphoserine mark is found at Ser139, Ser157, and Ser169. Residue Thr170 is modified to Phosphothreonine. A Phosphotyrosine modification is found at Tyr171. The 79-residue stretch at Lys186–Cys264 folds into the Thyroglobulin type-1 domain. 3 cysteine pairs are disulfide-bonded: Cys189/Cys219, Cys230/Cys241, and Cys243/Cys264. Position 255 is a phosphoserine (Ser255). The short motif at Arg259–Asp261 is the Cell attachment site element.

In terms of assembly, binds equally well IGF1 and IGF2. Interacts with integrin ITGA5:ITGB1. Interacts with VHL; this interaction inhibits HIF1A degradation.

The protein localises to the secreted. Functionally, multifunctional protein that plays a critical role in regulating the availability of IGFs such as IGF1 and IGF2 to their receptors and thereby regulates IGF-mediated cellular processes including cell migration, proliferation, differentiation or apoptosis in a cell-type specific manner. Also plays a positive role in cell migration by interacting with integrin ITGA5:ITGB1 through its RGD motif. Mechanistically, binding to integrins leads to activation of focal adhesion kinase/PTK2 and stimulation of the mitogen-activated protein kinase (MAPK) pathway. Regulates cardiomyocyte apoptosis by suppressing HIF-1alpha/HIF1A ubiquitination and subsequent degradation. This chain is Insulin-like growth factor-binding protein 1 (Igfbp1), found in Mus musculus (Mouse).